Here is an 85-residue protein sequence, read N- to C-terminus: Large ribosomal subunit protein bL27 (85 aa).

The tract at residues 1–22 (MAKTKAGGSTRNGRDSKGRRLG) is disordered.

The protein belongs to the bacterial ribosomal protein bL27 family.

The polypeptide is Large ribosomal subunit protein bL27 (Mycoplasmopsis pulmonis (strain UAB CTIP) (Mycoplasma pulmonis)).